The sequence spans 274 residues: Large ribosomal subunit protein uL2 (274 aa).

Disordered regions lie at residues 28–55 (APHAPLLEKKSKSGGRNNNGRITTRHVG) and 224–274 (VAMN…RRRK).

The protein belongs to the universal ribosomal protein uL2 family. As to quaternary structure, part of the 50S ribosomal subunit. Forms a bridge to the 30S subunit in the 70S ribosome.

Its function is as follows. One of the primary rRNA binding proteins. Required for association of the 30S and 50S subunits to form the 70S ribosome, for tRNA binding and peptide bond formation. It has been suggested to have peptidyltransferase activity; this is somewhat controversial. Makes several contacts with the 16S rRNA in the 70S ribosome. The protein is Large ribosomal subunit protein uL2 of Pseudomonas putida (strain GB-1).